The sequence spans 233 residues: Small ribosomal subunit protein uS3 (233 aa).

The region spanning 39 to 107 is the KH type-2 domain; the sequence is VRKYLTKELE…PAQINIAEVR (69 aa).

Belongs to the universal ribosomal protein uS3 family. As to quaternary structure, part of the 30S ribosomal subunit. Forms a tight complex with proteins S10 and S14.

Functionally, binds the lower part of the 30S subunit head. Binds mRNA in the 70S ribosome, positioning it for translation. The protein is Small ribosomal subunit protein uS3 of Pectobacterium carotovorum subsp. carotovorum (strain PC1).